Consider the following 164-residue polypeptide: Phosphopantetheine adenylyltransferase (164 aa).

Ser9 contributes to the substrate binding site. Residues 9-10 (SF) and His17 each bind ATP. Substrate-binding residues include Lys41, Leu73, and Lys87. ATP is bound by residues 88–90 (GLR), Glu98, and 122–128 (YSYLSSS).

It belongs to the bacterial CoaD family. As to quaternary structure, homohexamer. Requires Mg(2+) as cofactor.

The protein localises to the cytoplasm. The catalysed reaction is (R)-4'-phosphopantetheine + ATP + H(+) = 3'-dephospho-CoA + diphosphate. It functions in the pathway cofactor biosynthesis; coenzyme A biosynthesis; CoA from (R)-pantothenate: step 4/5. Reversibly transfers an adenylyl group from ATP to 4'-phosphopantetheine, yielding dephospho-CoA (dPCoA) and pyrophosphate. This is Phosphopantetheine adenylyltransferase from Rhodococcus opacus (strain B4).